We begin with the raw amino-acid sequence, 643 residues long: 1-deoxy-D-xylulose-5-phosphate synthase (643 aa).

Residues His-78 and 119-121 each bind thiamine diphosphate; that span reads AHS. A Mg(2+)-binding site is contributed by Asp-150. Thiamine diphosphate is bound by residues 151 to 152, Asn-179, Tyr-288, and Glu-370; that span reads GS. A Mg(2+)-binding site is contributed by Asn-179.

This sequence belongs to the transketolase family. DXPS subfamily. Homodimer. Requires Mg(2+) as cofactor. Thiamine diphosphate serves as cofactor.

The catalysed reaction is D-glyceraldehyde 3-phosphate + pyruvate + H(+) = 1-deoxy-D-xylulose 5-phosphate + CO2. The protein operates within metabolic intermediate biosynthesis; 1-deoxy-D-xylulose 5-phosphate biosynthesis; 1-deoxy-D-xylulose 5-phosphate from D-glyceraldehyde 3-phosphate and pyruvate: step 1/1. In terms of biological role, catalyzes the acyloin condensation reaction between C atoms 2 and 3 of pyruvate and glyceraldehyde 3-phosphate to yield 1-deoxy-D-xylulose-5-phosphate (DXP). The polypeptide is 1-deoxy-D-xylulose-5-phosphate synthase (Brucella melitensis biotype 2 (strain ATCC 23457)).